Consider the following 519-residue polypeptide: Spermidine/putrescine import ATP-binding protein PotA (519 aa).

The 396-residue stretch at 6–401 (LHLRDITKIY…PNSLWVANFI (396 aa)) folds into the ABC transporter domain. Residue 39 to 46 (GPSGCGKT) participates in ATP binding. Residues 107 to 270 (RKPKDNVDQS…EQFENKNITR (164 aa)) form an insert region.

It belongs to the ABC transporter superfamily. Spermidine/putrescine importer (TC 3.A.1.11.1) family. In terms of assembly, the complex is composed of two ATP-binding proteins (PotA), two transmembrane proteins (PotB and PotC) and a solute-binding protein (PotD).

Its subcellular location is the cell membrane. It catalyses the reaction ATP + H2O + polyamine-[polyamine-binding protein]Side 1 = ADP + phosphate + polyamineSide 2 + [polyamine-binding protein]Side 1.. Its function is as follows. Part of the ABC transporter complex PotABCD involved in spermidine/putrescine import. Responsible for energy coupling to the transport system. This chain is Spermidine/putrescine import ATP-binding protein PotA, found in Ureaplasma parvum serovar 3 (strain ATCC 700970).